A 92-amino-acid chain; its full sequence is MKLCVSALSLLLLVAAFCAPGFSAPMGSDPPTSCCFSYTSRQLHRSFVMDYYETSSLCSKPAVVFLTKRGRQICANPSEPWVTEYMSDLELN.

The first 23 residues, 1 to 23, serve as a signal peptide directing secretion; sequence MKLCVSALSLLLLVAAFCAPGFS. 2 cysteine pairs are disulfide-bonded: C34–C58 and C35–C74.

The protein belongs to the intercrine beta (chemokine CC) family. As to quaternary structure, homodimer.

Its subcellular location is the secreted. Its function is as follows. Monokine with inflammatory and chemokinetic properties. The chain is C-C motif chemokine 4 (Ccl4) from Mus musculus (Mouse).